We begin with the raw amino-acid sequence, 302 residues long: Pathogenicity locus probable regulatory protein HrpS (302 aa).

The 229-residue stretch at 9–237 folds into the Sigma-54 factor interaction domain; sequence DDLDEERVPN…LKAAAKRHVL (229 aa). Residues 37–44 and 99–108 contribute to the ATP site; these read GETGTGKD and AQGGTLYLDE. The H-T-H motif DNA-binding region spans 279 to 298; sequence IDAASLELDMPRRTLYRRIK.

In terms of biological role, member of the two-component regulatory system HrpR/HrpS that regulates the activation of the sigma factor hrpL which itself induces the expression of hprD as well as other hrp loci which are involved in plant pathogenicity, hrmA and avr genes. Probably interacts with sigma-54. The sequence is that of Pathogenicity locus probable regulatory protein HrpS (hrpS) from Pseudomonas savastanoi pv. phaseolicola (Pseudomonas syringae pv. phaseolicola).